The primary structure comprises 141 residues: Transmembrane protein 216 (141 aa).

Helical transmembrane passes span 15–35 (ILFF…LFIF), 49–69 (LVLD…RLFF), 82–102 (LGIS…YLLL), and 115–135 (SILL…LTAF).

In terms of assembly, part of the tectonic-like complex (also named B9 complex). Interacts with TMEM107.

The protein resides in the membrane. It localises to the cytoplasm. It is found in the cytoskeleton. Its subcellular location is the cilium basal body. Functionally, part of the tectonic-like complex which is required for tissue-specific ciliogenesis and may regulate ciliary membrane composition. This chain is Transmembrane protein 216 (TMEM216), found in Bos taurus (Bovine).